A 73-amino-acid polypeptide reads, in one-letter code: Large ribosomal subunit protein bL31 (73 aa).

4 residues coordinate Zn(2+): C16, C18, C38, and C41.

It belongs to the bacterial ribosomal protein bL31 family. Type A subfamily. As to quaternary structure, part of the 50S ribosomal subunit. Zn(2+) is required as a cofactor.

In terms of biological role, binds the 23S rRNA. This chain is Large ribosomal subunit protein bL31, found in Vibrio vulnificus (strain YJ016).